The chain runs to 163 residues: Nucleotide-binding protein HS_0688 (163 aa).

The protein belongs to the YajQ family.

Functionally, nucleotide-binding protein. In Histophilus somni (strain 129Pt) (Haemophilus somnus), this protein is Nucleotide-binding protein HS_0688.